Consider the following 363-residue polypeptide: Glutamate--cysteine ligase (363 aa).

The protein belongs to the glutamate--cysteine ligase type 2 family. YbdK subfamily.

The catalysed reaction is L-cysteine + L-glutamate + ATP = gamma-L-glutamyl-L-cysteine + ADP + phosphate + H(+). Functionally, catalyzes the synthesis of gamma-glutamylcysteine (gamma-GC), the main low-molecular-weight thiol compound instead of glutathione in halophilic archaea. This is Glutamate--cysteine ligase from Haloquadratum walsbyi (strain DSM 16790 / HBSQ001).